The primary structure comprises 569 residues: Proline--tRNA ligase (569 aa).

This sequence belongs to the class-II aminoacyl-tRNA synthetase family. ProS type 1 subfamily. In terms of assembly, homodimer.

It localises to the cytoplasm. It carries out the reaction tRNA(Pro) + L-proline + ATP = L-prolyl-tRNA(Pro) + AMP + diphosphate. In terms of biological role, catalyzes the attachment of proline to tRNA(Pro) in a two-step reaction: proline is first activated by ATP to form Pro-AMP and then transferred to the acceptor end of tRNA(Pro). As ProRS can inadvertently accommodate and process non-cognate amino acids such as alanine and cysteine, to avoid such errors it has two additional distinct editing activities against alanine. One activity is designated as 'pretransfer' editing and involves the tRNA(Pro)-independent hydrolysis of activated Ala-AMP. The other activity is designated 'posttransfer' editing and involves deacylation of mischarged Ala-tRNA(Pro). The misacylated Cys-tRNA(Pro) is not edited by ProRS. The sequence is that of Proline--tRNA ligase from Campylobacter jejuni subsp. jejuni serotype O:2 (strain ATCC 700819 / NCTC 11168).